Reading from the N-terminus, the 120-residue chain is NAD(P)H-quinone oxidoreductase subunit 3, chloroplastic (120 aa).

The next 3 membrane-spanning stretches (helical) occupy residues 14–34, 64–84, and 88–108; these read LIIS…LAPI, MFAL…PWAM, and ILGV…IVGL.

It belongs to the complex I subunit 3 family. NDH is composed of at least 16 different subunits, 5 of which are encoded in the nucleus.

It is found in the plastid. It localises to the chloroplast thylakoid membrane. The catalysed reaction is a plastoquinone + NADH + (n+1) H(+)(in) = a plastoquinol + NAD(+) + n H(+)(out). The enzyme catalyses a plastoquinone + NADPH + (n+1) H(+)(in) = a plastoquinol + NADP(+) + n H(+)(out). NDH shuttles electrons from NAD(P)H:plastoquinone, via FMN and iron-sulfur (Fe-S) centers, to quinones in the photosynthetic chain and possibly in a chloroplast respiratory chain. The immediate electron acceptor for the enzyme in this species is believed to be plastoquinone. Couples the redox reaction to proton translocation, and thus conserves the redox energy in a proton gradient. The polypeptide is NAD(P)H-quinone oxidoreductase subunit 3, chloroplastic (Coffea arabica (Arabian coffee)).